Consider the following 394-residue polypeptide: Suppressor APC domain-containing protein 2 (394 aa).

Disordered regions lie at residues 1-23, 95-125, and 150-188; these read MAGAAMAERGRVPPPAPAPSTEG, LLSADGGPRDPTRAPARPGDQPPPPPQRLVF, and GPSAAARSPEQLCAPAEAAPCPAEPERSQSAALEPSSSA. Residues 177 to 188 show a composition bias toward polar residues; it reads SQSAALEPSSSA. Thr-219 is subject to Phosphothreonine. Residues 227 to 277 are a coiled coil; that stretch reads GLLKQMKELEQEKEVLLQGLEMMARGRDWYQQQLQRVQERQRRLGQSRASA. Ser-284 carries the phosphoserine modification. Positions 336–384 form a coiled coil; the sequence is QQQTILMLKEQNRLLTQEVTEKSERITQLEQEKSALIKQLFEARALSQQ.

In terms of assembly, interacts with a spindle orientation complex at least composed of GNAI1, GPSM2 and NUMA1. Interacts with GPSM2 (via TPR motifs); this interaction is required to prevent GPSM2 anchoring at the mitotic apical cortex and is inhibited in presence of NUMA1 in a dose dependent manner. Interacts with PARD3. Expressed in 5-month-old fetal tissues, including stomach, intestine, colon, liver, brain, lung, heart, spleen and kidney. Undetectable in non-cancerous adult tissues. Expressed in many primary gastric carcinoma, but almost not in adjacent normal mucosa. Expressed preferentially in M and G1 phases, compared to S and G2 phases. Expression is up-regulated in hepatocellular carcinoma (HCC) and colorectal cancer (CRC) tissues (at protein level).

It is found in the cytoplasm. The protein localises to the nucleus. Its subcellular location is the cell cortex. It localises to the apical cell membrane. The protein resides in the cell junction. It is found in the tight junction. In terms of biological role, plays a role in planar mitotic spindle orientation in retinal progenitor cells (RPCs) and promotes the production of symmetric terminal divisions. Negatively regulates the mitotic apical cortex localization of GPSM2. Involved also in positive regulation of cell proliferation and tumor cell growth. The chain is Suppressor APC domain-containing protein 2 from Homo sapiens (Human).